We begin with the raw amino-acid sequence, 349 residues long: ATPase GET3 (349 aa).

ATP is bound at residue 27-34 (KGGVGKTT). Asp58 is an active-site residue. ATP-binding residues include Glu240 and Asn267. Residues Cys280 and Cys283 each contribute to the Zn(2+) site.

Belongs to the arsA ATPase family. Homodimer. Component of the Golgi to ER traffic (GET) complex, which is composed of GET1, GET2 and GET3. Within the complex, GET1 and GET2 form a heterotetramer which is stabilized by phosphatidylinositol binding and which binds to the GET3 homodimer. Interacts with the chloride channel protein GEF1.

The protein localises to the cytoplasm. It is found in the endoplasmic reticulum. It localises to the golgi apparatus. In terms of biological role, ATPase required for the post-translational delivery of tail-anchored (TA) proteins to the endoplasmic reticulum. Recognizes and selectively binds the transmembrane domain of TA proteins in the cytosol. This complex then targets to the endoplasmic reticulum by membrane-bound receptors GET1 and GET2, where the tail-anchored protein is released for insertion. This process is regulated by ATP binding and hydrolysis. ATP binding drives the homodimer towards the closed dimer state, facilitating recognition of newly synthesized TA membrane proteins. ATP hydrolysis is required for insertion. Subsequently, the homodimer reverts towards the open dimer state, lowering its affinity for the GET1-GET2 receptor, and returning it to the cytosol to initiate a new round of targeting. Cooperates with the HDEL receptor ERD2 to mediate the ATP-dependent retrieval of resident ER proteins that contain a C-terminal H-D-E-L retention signal from the Golgi to the ER. Involved in low-level resistance to the oxyanions arsenite and arsenate, and in heat tolerance. This chain is ATPase GET3, found in Eremothecium gossypii (strain ATCC 10895 / CBS 109.51 / FGSC 9923 / NRRL Y-1056) (Yeast).